The following is a 24-amino-acid chain: Antimicrobial peptide PGQ (24 aa).

The protein belongs to the gastrin/cholecystokinin family. Magainin subfamily. Is synthesized in the stomach and stored in a novel granular multinucleated cell in the gastric mucosa. It is stored as active, processed peptides in large granules within the granular gland secretions of the skin.

The protein localises to the secreted. Its function is as follows. Antimicrobial peptide. This Xenopus laevis (African clawed frog) protein is Antimicrobial peptide PGQ (pgq).